An 804-amino-acid polypeptide reads, in one-letter code: Tubulin polyglutamylase TTLL13 (804 aa).

The segment at 1-41 is disordered; sequence MEPNNCKTSESEEDDIEEEESEEECVREESTTPNSTQQALR. Residues 4-30 adopt a coiled-coil conformation; it reads NNCKTSESEEDDIEEEESEEECVREES. Positions 11 to 26 are enriched in acidic residues; sequence SEEDDIEEEESEEECV. The TTL domain occupies 85 to 430; that stretch reads RRPLAINLTN…RGCDKKKVIE (346 aa). Residues Lys202, 208 to 209, 230 to 233, and 243 to 245 each bind ATP; these read QG, QQYI, and KFD. Gln208 is a binding site for a protein. Arg269 contributes to the L-glutamate binding site. 291–292 is an ATP binding site; it reads TN. L-glutamate contacts are provided by Tyr293 and Lys311. The Mg(2+) site is built by Asp376, Glu389, and Asn391. A protein is bound at residue His392. The segment at 401-482 is c-MTBD region; sequence RLDREVKDAL…LGGYRRIYPG (82 aa). Lys407 contacts L-glutamate. 2 coiled-coil regions span residues 504–541 and 585–609; these read ASKAREECARQQLEEIRLKQEQQENPGTKKRKENKEQN and QDIVEEEELERMKLLLQRENLIRSL. The tract at residues 519–556 is disordered; it reads IRLKQEQQENPGTKKRKENKEQNQGESAGEKSRSRTAT. The segment covering 536-551 has biased composition (basic and acidic residues); sequence ENKEQNQGESAGEKSR.

This sequence belongs to the tubulin--tyrosine ligase family. It depends on Mg(2+) as a cofactor. Highly expressed in heart and testis. Expressed in brain, kidney, liver, lung, muscle and trachea. In the brain, expressed in ependymal cilia, cortex, corpus callosum and striatum.

It catalyses the reaction (L-glutamyl)(n)-gamma-L-glutamyl-L-glutamyl-[protein] + L-glutamate + ATP = (L-glutamyl)(n+1)-gamma-L-glutamyl-L-glutamyl-[protein] + ADP + phosphate + H(+). Functionally, polyglutamylase which modifies tubulin, generating polyglutamate side chains of variable lengths on the gamma-carboxyl group of specific glutamate residues within the C-terminal tail of tubulin. Mediates ATP-dependent polyglutamate side-chain elongation of the polyglutamylation reaction but not the initiation step. Preferentially modifies the alpha-tubulin tail over a beta-tail. The polypeptide is Tubulin polyglutamylase TTLL13 (Mus musculus (Mouse)).